The sequence spans 214 residues: Cell division protein DamX (214 aa).

Polar residues-rich tracts occupy residues 1–14 and 43–53; these read GSGT…QPQQ and QGMTGAASTLP. Residues 1-133 are disordered; sequence GSGTPTEAQT…SVQSAPGSHY (133 aa). The chain crosses the membrane as a helical span at residues 44 to 65; it reads GMTGAASTLPTAPATVMSGAAA. Low complexity-rich tracts occupy residues 78–97 and 110–131; these read QQHK…TQHK and SSTA…APGS. The SPOR domain occupies 127-204; it reads SAPGSHYTLQ…VQAKKPWVRP (78 aa).

This sequence belongs to the DamX family.

It localises to the cell inner membrane. Its function is as follows. Non-essential cell division protein. This chain is Cell division protein DamX, found in Serratia marcescens.